The following is a 277-amino-acid chain: Formamidopyrimidine-DNA glycosylase (277 aa).

Proline 2 (schiff-base intermediate with DNA) is an active-site residue. Glutamate 3 serves as the catalytic Proton donor. The active-site Proton donor; for beta-elimination activity is the lysine 59. DNA is bound by residues histidine 96, arginine 115, and arginine 158. The FPG-type zinc-finger motif lies at 243–277; that stretch reads WVYGRGGNPCRRCGGEILREKRAGRSTHFCPRCQK. Arginine 267 functions as the Proton donor; for delta-elimination activity in the catalytic mechanism.

Belongs to the FPG family. In terms of assembly, monomer. Zn(2+) is required as a cofactor.

The enzyme catalyses Hydrolysis of DNA containing ring-opened 7-methylguanine residues, releasing 2,6-diamino-4-hydroxy-5-(N-methyl)formamidopyrimidine.. It carries out the reaction 2'-deoxyribonucleotide-(2'-deoxyribose 5'-phosphate)-2'-deoxyribonucleotide-DNA = a 3'-end 2'-deoxyribonucleotide-(2,3-dehydro-2,3-deoxyribose 5'-phosphate)-DNA + a 5'-end 5'-phospho-2'-deoxyribonucleoside-DNA + H(+). Involved in base excision repair of DNA damaged by oxidation or by mutagenic agents. Acts as a DNA glycosylase that recognizes and removes damaged bases. Has a preference for oxidized purines, such as 7,8-dihydro-8-oxoguanine (8-oxoG). Has AP (apurinic/apyrimidinic) lyase activity and introduces nicks in the DNA strand. Cleaves the DNA backbone by beta-delta elimination to generate a single-strand break at the site of the removed base with both 3'- and 5'-phosphates. In Heliobacterium modesticaldum (strain ATCC 51547 / Ice1), this protein is Formamidopyrimidine-DNA glycosylase.